The following is a 54-amino-acid chain: Protein GndA (54 aa).

Residues 28–50 (LFVVIVSFQQRALTSSVPVFLAV) form a helical membrane-spanning segment.

It localises to the cell inner membrane. In Escherichia coli (strain K12), this protein is Protein GndA.